The following is a 238-amino-acid chain: Small ribosomal subunit protein eS4 (238 aa).

In terms of domain architecture, S4 RNA-binding spans Ile38–Pro109.

Belongs to the eukaryotic ribosomal protein eS4 family.

This Pyrobaculum neutrophilum (strain DSM 2338 / JCM 9278 / NBRC 100436 / V24Sta) (Thermoproteus neutrophilus) protein is Small ribosomal subunit protein eS4.